The following is a 309-amino-acid chain: Porphobilinogen deaminase (309 aa).

Cys-241 carries the post-translational modification S-(dipyrrolylmethanemethyl)cysteine.

This sequence belongs to the HMBS family. Monomer. Dipyrromethane is required as a cofactor.

It carries out the reaction 4 porphobilinogen + H2O = hydroxymethylbilane + 4 NH4(+). Its pathway is porphyrin-containing compound metabolism; protoporphyrin-IX biosynthesis; coproporphyrinogen-III from 5-aminolevulinate: step 2/4. Tetrapolymerization of the monopyrrole PBG into the hydroxymethylbilane pre-uroporphyrinogen in several discrete steps. In Bacillus cereus (strain G9842), this protein is Porphobilinogen deaminase.